The sequence spans 306 residues: Glutaminase (306 aa).

7 residues coordinate substrate: Ser-64, Asn-115, Glu-159, Asn-166, Tyr-190, Tyr-242, and Val-260.

Belongs to the glutaminase family. In terms of assembly, homotetramer.

The enzyme catalyses L-glutamine + H2O = L-glutamate + NH4(+). The sequence is that of Glutaminase from Vibrio cholerae serotype O1 (strain ATCC 39541 / Classical Ogawa 395 / O395).